Consider the following 204-residue polypeptide: SOSS complex subunit B homolog (204 aa).

The OB DNA-binding region spans 24-94 (IVLEVGVATV…TLYSGKNGEV (71 aa)). The segment at 115–204 (RAEQQAVANP…GRGGLKGERR (90 aa)) is disordered. Low complexity-rich tracts occupy residues 122–131 (ANPAATPAGL) and 139–183 (GLPA…QTTT). Positions 187–198 (TRGGRGGGGRGG) are enriched in gly residues.

This sequence belongs to the SOSS-B family.

This is SOSS complex subunit B homolog from Drosophila melanogaster (Fruit fly).